The sequence spans 102 residues: Large ribosomal subunit protein bL21 (102 aa).

The protein belongs to the bacterial ribosomal protein bL21 family. As to quaternary structure, part of the 50S ribosomal subunit. Contacts protein L20.

In terms of biological role, this protein binds to 23S rRNA in the presence of protein L20. The chain is Large ribosomal subunit protein bL21 from Campylobacter jejuni subsp. doylei (strain ATCC BAA-1458 / RM4099 / 269.97).